A 202-amino-acid polypeptide reads, in one-letter code: Imidazole glycerol phosphate synthase subunit HisH (202 aa).

One can recognise a Glutamine amidotransferase type-1 domain in the interval 3–202 (RIVIIDYGLG…KILKNFVEMC (200 aa)). The active-site Nucleophile is the Cys-79. Residues His-183 and Glu-185 contribute to the active site.

In terms of assembly, heterodimer of HisH and HisF.

The protein localises to the cytoplasm. It catalyses the reaction 5-[(5-phospho-1-deoxy-D-ribulos-1-ylimino)methylamino]-1-(5-phospho-beta-D-ribosyl)imidazole-4-carboxamide + L-glutamine = D-erythro-1-(imidazol-4-yl)glycerol 3-phosphate + 5-amino-1-(5-phospho-beta-D-ribosyl)imidazole-4-carboxamide + L-glutamate + H(+). It carries out the reaction L-glutamine + H2O = L-glutamate + NH4(+). The protein operates within amino-acid biosynthesis; L-histidine biosynthesis; L-histidine from 5-phospho-alpha-D-ribose 1-diphosphate: step 5/9. In terms of biological role, IGPS catalyzes the conversion of PRFAR and glutamine to IGP, AICAR and glutamate. The HisH subunit catalyzes the hydrolysis of glutamine to glutamate and ammonia as part of the synthesis of IGP and AICAR. The resulting ammonia molecule is channeled to the active site of HisF. In Methanosarcina acetivorans (strain ATCC 35395 / DSM 2834 / JCM 12185 / C2A), this protein is Imidazole glycerol phosphate synthase subunit HisH.